A 263-amino-acid chain; its full sequence is Proteasome subunit alpha type-1 (263 aa).

Position 1 is an N-acetylmethionine (Met-1). Position 110 is a phosphoserine; alternate (Ser-110). An O-linked (GlcNAc) serine; alternate glycan is attached at Ser-110. A Glycyl lysine isopeptide (Lys-Gly) (interchain with G-Cter in ubiquitin) cross-link involves residue Lys-115. Residue Ser-177 is modified to Phosphoserine. Lys-208 participates in a covalent cross-link: Glycyl lysine isopeptide (Lys-Gly) (interchain with G-Cter in ubiquitin). The interval 232 to 263 (FLDGLEERPQRKAQPSQAADEPAEKADEPMEH) is disordered. Positions 253–263 (PAEKADEPMEH) are enriched in basic and acidic residues.

Belongs to the peptidase T1A family. The 26S proteasome consists of a 20S proteasome core and two 19S regulatory subunits. The 20S proteasome core is a barrel-shaped complex made of 28 subunits that are arranged in four stacked rings. The two outer rings are each formed by seven alpha subunits, and the two inner rings are formed by seven beta subunits. The proteolytic activity is exerted by three beta-subunits PSMB5, PSMB6 and PSMB7. Interacts with NOTCH3. Interacts with ZFAND1. Post-translationally, proteolytically cleaved from a C-terminal extension in the course of the conversion of the proteasome from its latent form into its active form. In terms of tissue distribution, ubiquitous.

The protein resides in the cytoplasm. It localises to the nucleus. In terms of biological role, component of the 20S core proteasome complex involved in the proteolytic degradation of most intracellular proteins. This complex plays numerous essential roles within the cell by associating with different regulatory particles. Associated with two 19S regulatory particles, forms the 26S proteasome and thus participates in the ATP-dependent degradation of ubiquitinated proteins. The 26S proteasome plays a key role in the maintenance of protein homeostasis by removing misfolded or damaged proteins that could impair cellular functions, and by removing proteins whose functions are no longer required. Associated with the PA200 or PA28, the 20S proteasome mediates ubiquitin-independent protein degradation. This type of proteolysis is required in several pathways including spermatogenesis (20S-PA200 complex) or generation of a subset of MHC class I-presented antigenic peptides (20S-PA28 complex). The sequence is that of Proteasome subunit alpha type-1 (Psma1) from Rattus norvegicus (Rat).